The following is a 372-amino-acid chain: Probable NADH-dependent flavin oxidoreductase YqiG (372 aa).

This sequence belongs to the NADH:flavin oxidoreductase/NADH oxidase family.

The protein is Probable NADH-dependent flavin oxidoreductase YqiG (yqiG) of Bacillus subtilis (strain 168).